Here is a 378-residue protein sequence, read N- to C-terminus: Cysteine endopeptidase RepA (378 aa).

The signal sequence occupies residues 1–24 (MLRCFLVAAAAVALAAAAAAPARA). Positions 25-141 (IPFTESDLSS…SFRYGGDDED (117 aa)) are cleaved as a propeptide — activation peptide. 3 disulfides stabilise this stretch: C164–C206, C198–C239, and C297–C350. C167 is an active-site residue. Active-site residues include H303 and N324.

This sequence belongs to the peptidase C1 family.

The protein localises to the protein storage vacuole. In terms of biological role, cysteine endopeptidase that digests in vitro both the acidic and basic subunits of glutelin, the major seed storage protein of rice. The sequence is that of Cysteine endopeptidase RepA from Oryza sativa subsp. japonica (Rice).